A 237-amino-acid polypeptide reads, in one-letter code: Urease accessory protein UreF (237 aa).

The protein belongs to the UreF family. In terms of assembly, ureD, UreF and UreG form a complex that acts as a GTP-hydrolysis-dependent molecular chaperone, activating the urease apoprotein by helping to assemble the nickel containing metallocenter of UreC. The UreE protein probably delivers the nickel.

The protein localises to the cytoplasm. Its function is as follows. Required for maturation of urease via the functional incorporation of the urease nickel metallocenter. The sequence is that of Urease accessory protein UreF from Methylibium petroleiphilum (strain ATCC BAA-1232 / LMG 22953 / PM1).